A 319-amino-acid chain; its full sequence is DNA-directed RNA polymerases II, IV and V subunit 3 (319 aa).

Residue M1 is modified to N-acetylmethionine.

The protein belongs to the archaeal Rpo3/eukaryotic RPB3 RNA polymerase subunit family. In terms of assembly, component of the RNA polymerase II complex consisting of at least 12 subunits. Interacts with SHH1, CLSY1, NRPB11 and NRPD1. Interacts with IYO.

The protein localises to the nucleus. In terms of biological role, DNA-dependent RNA polymerase catalyzes the transcription of DNA into RNA using the four ribonucleoside triphosphates as substrates. Component of RNA polymerase II which synthesizes mRNA precursors and many functional non-coding RNAs. Pol II is the central component of the basal RNA polymerase II transcription machinery. It is composed of mobile elements that move relative to each other. NRPB3 is part of the core element with the central large cleft and the clamp element that moves to open and close the cleft. Component of RNA polymerases IV and V which mediate short-interfering RNAs (siRNA) accumulation and subsequent RNA-directed DNA methylation-dependent (RdDM) transcriptional gene silencing (TGS) of endogenous repeated sequences, including transposable elements. The protein is DNA-directed RNA polymerases II, IV and V subunit 3 (NRPB3) of Arabidopsis thaliana (Mouse-ear cress).